Here is a 471-residue protein sequence, read N- to C-terminus: Glutamine synthetase (471 aa).

Positions 14-99 constitute a GS beta-grasp domain; the sequence is QKIQMIDLKF…ICSIKEPRTG (86 aa). The GS catalytic domain occupies 106-471; that stretch reads PRVIAQKAID…PYEFYLYYDC (366 aa). The Mg(2+) site is built by glutamate 131 and glutamate 133. An ATP-binding site is contributed by glutamate 208. 2 residues coordinate Mg(2+): glutamate 213 and glutamate 221. Residues 265-266 and glycine 266 each bind L-glutamate; that span reads NG. Mg(2+) is bound at residue histidine 270. Residues 272 to 274 and serine 274 each bind ATP; that span reads HQS. L-glutamate is bound by residues arginine 322, glutamate 328, and arginine 340. The ATP site is built by arginine 340, arginine 345, and lysine 354. Glutamate 359 provides a ligand contact to Mg(2+). L-glutamate is bound at residue arginine 361. At tyrosine 399 the chain carries O-AMP-tyrosine.

It belongs to the glutamine synthetase family. In terms of assembly, oligomer of 12 subunits arranged in the form of two hexagons. Mg(2+) serves as cofactor.

It localises to the cytoplasm. The enzyme catalyses L-glutamate + NH4(+) + ATP = L-glutamine + ADP + phosphate + H(+). Its activity is regulated as follows. The activity of this enzyme could be controlled by adenylation under conditions of abundant glutamine. Its function is as follows. Involved in nitrogen metabolism via ammonium assimilation. Catalyzes the ATP-dependent biosynthesis of glutamine from glutamate and ammonia. The protein is Glutamine synthetase of Microchaete diplosiphon (Fremyella diplosiphon).